A 590-amino-acid chain; its full sequence is Putative histone-lysine N-methyltransferase PRDM6 (590 aa).

Residues Gln25–Ala87 form a disordered region. The segment covering His29–Gly42 has biased composition (gly residues). Residues Ala71–Ala87 show a composition bias toward low complexity. The SET domain occupies Arg241–Asn360. The C2H2-type 1; degenerate zinc finger occupies Trp468–Gln490. C2H2-type zinc fingers lie at residues Tyr496 to His518 and Phe524 to His546. A C2H2-type 4; degenerate zinc finger spans residues Phe552 to Pro574.

It belongs to the class V-like SAM-binding methyltransferase superfamily. As to quaternary structure, interacts with HDAC1, HDAC2, HDAC3, CBX1 and EP300.

It localises to the nucleus. The catalysed reaction is L-lysyl(20)-[histone H4] + S-adenosyl-L-methionine = N(6)-methyl-L-lysyl(20)-[histone H4] + S-adenosyl-L-homocysteine + H(+). Functionally, putative histone methyltransferase that acts as a transcriptional repressor of smooth muscle gene expression. Promotes the transition from differentiated to proliferative smooth muscle by suppressing differentiation and maintaining the proliferative potential of vascular smooth muscle cells. Also plays a role in endothelial cells by inhibiting endothelial cell proliferation, survival and differentiation. It is unclear whether it has histone methyltransferase activity in vivo. According to some authors, it does not act as a histone methyltransferase by itself and represses transcription by recruiting EHMT2/G9a. According to others, it possesses histone methyltransferase activity when associated with other proteins and specifically methylates 'Lys-20' of histone H4 in vitro. 'Lys-20' methylation represents a specific tag for epigenetic transcriptional repression. In Bos taurus (Bovine), this protein is Putative histone-lysine N-methyltransferase PRDM6 (PRDM6).